A 260-amino-acid chain; its full sequence is Shikimate dehydrogenase (NADP(+)) (260 aa).

Residues 14 to 16 and T60 each bind shikimate; that span reads SAS. The Proton acceptor role is filled by K64. Shikimate contacts are provided by N85 and D100. NADP(+)-binding positions include 121 to 125, 145 to 150, and F201; these read GAGGA and NRTYER. Residue Y203 coordinates shikimate. G225 contacts NADP(+).

It belongs to the shikimate dehydrogenase family. As to quaternary structure, homodimer.

The enzyme catalyses shikimate + NADP(+) = 3-dehydroshikimate + NADPH + H(+). It functions in the pathway metabolic intermediate biosynthesis; chorismate biosynthesis; chorismate from D-erythrose 4-phosphate and phosphoenolpyruvate: step 4/7. In terms of biological role, involved in the biosynthesis of the chorismate, which leads to the biosynthesis of aromatic amino acids. Catalyzes the reversible NADPH linked reduction of 3-dehydroshikimate (DHSA) to yield shikimate (SA). In Pyrobaculum islandicum (strain DSM 4184 / JCM 9189 / GEO3), this protein is Shikimate dehydrogenase (NADP(+)).